We begin with the raw amino-acid sequence, 105 residues long: Small ribosomal subunit protein uS10 (105 aa).

It belongs to the universal ribosomal protein uS10 family. Part of the 30S ribosomal subunit.

Functionally, involved in the binding of tRNA to the ribosomes. This is Small ribosomal subunit protein uS10 from Rickettsia typhi (strain ATCC VR-144 / Wilmington).